A 482-amino-acid chain; its full sequence is 7-deoxyloganetic acid glucosyltransferase (482 aa).

His22 acts as the Proton acceptor in catalysis. His22 is an an anthocyanidin binding site. Asp127 acts as the Charge relay in catalysis. Residues Thr149, Ala362, Gln364, His379, Trp382, Asn383, Ser384, and Glu387 each coordinate UDP-alpha-D-glucose. An an anthocyanidin-binding site is contributed by Ala402. 2 residues coordinate UDP-alpha-D-glucose: Asp403 and Gln404.

The protein belongs to the UDP-glycosyltransferase family. Expressed in leaves, roots and stems. Lower levels of expression in flowers. Preferentially expressed in internal phloem parenchyma cells.

The catalysed reaction is 7-deoxyloganetate + UDP-alpha-D-glucose = 7-deoxyloganate + UDP + H(+). Iridoid glucosyltransferase acting exclusively on 7-deoxyloganetic acid. No activity with 7-deoxyloganetin. Catalyzes the fourth to last step in secologanin biosynthesis. The protein is 7-deoxyloganetic acid glucosyltransferase (UGT709C2) of Catharanthus roseus (Madagascar periwinkle).